The primary structure comprises 139 residues: Trafficking protein particle complex subunit 2-like protein (139 aa).

Belongs to the TRAPP small subunits family. Sedlin subfamily. As to quaternary structure, component of the multisubunit TRAPP (transport protein particle) complex, which includes at least TRAPPC2, TRAPPC2L, TRAPPC3, TRAPPC3L, TRAPPC4, TRAPPC5, TRAPPC8, TRAPPC9, TRAPPC10, TRAPPC11 and TRAPPC12. Interacts with the heterodimer TRAPPC3-TRAPPC6A.

Its subcellular location is the cytoplasm. The protein resides in the perinuclear region. It is found in the endoplasmic reticulum. The protein localises to the golgi apparatus. May play a role in vesicular transport from endoplasmic reticulum to Golgi. This is Trafficking protein particle complex subunit 2-like protein (Trappc2l) from Mus musculus (Mouse).